A 65-amino-acid chain; its full sequence is Disintegrin CC8B (65 aa).

The Disintegrin domain maps to 1–65 (NSAHPCCDPV…DCPRNPWHKS (65 aa)). Cystine bridges form between cysteine 6–cysteine 29, cysteine 20–cysteine 26, cysteine 25–cysteine 50, and cysteine 38–cysteine 57. The Cell attachment site; atypical (WGD) motif lies at 42-44 (WGD).

This sequence belongs to the disintegrin family. Dimeric disintegrin subfamily. Heterodimer with CC8A; disulfide-linked. In terms of tissue distribution, expressed by the venom gland.

It localises to the secreted. Inhibits integrins alpha-IIb/beta-3 (ITGA2B/ITGB3), alpha-V/beta-3 (ITGAV/ITGB3), and alpha-5/beta-1 (ITGA5/ITGB1). The protein is Disintegrin CC8B of Cerastes cerastes (Horned desert viper).